A 218-amino-acid polypeptide reads, in one-letter code: Octanoyltransferase (218 aa).

One can recognise a BPL/LPL catalytic domain in the interval 31–206; the sequence is REAGDEVWLV…QLVKHLDYAE (176 aa). Substrate is bound by residues 70 to 77, 137 to 139, and 150 to 152; these read RGGQVTYH, SLG, and GLA. C168 acts as the Acyl-thioester intermediate in catalysis.

Belongs to the LipB family.

The protein resides in the cytoplasm. The enzyme catalyses octanoyl-[ACP] + L-lysyl-[protein] = N(6)-octanoyl-L-lysyl-[protein] + holo-[ACP] + H(+). It participates in protein modification; protein lipoylation via endogenous pathway; protein N(6)-(lipoyl)lysine from octanoyl-[acyl-carrier-protein]: step 1/2. Catalyzes the transfer of endogenously produced octanoic acid from octanoyl-acyl-carrier-protein onto the lipoyl domains of lipoate-dependent enzymes. Lipoyl-ACP can also act as a substrate although octanoyl-ACP is likely to be the physiological substrate. This is Octanoyltransferase from Pseudomonas syringae pv. tomato (strain ATCC BAA-871 / DC3000).